A 639-amino-acid polypeptide reads, in one-letter code: tRNA uridine 5-carboxymethylaminomethyl modification enzyme MnmG (639 aa).

Residue 13 to 18 (GGGHAG) participates in FAD binding. 274–288 (GPRYCPSIEDKIHRF) contacts NAD(+).

This sequence belongs to the MnmG family. As to quaternary structure, homodimer. Heterotetramer of two MnmE and two MnmG subunits. FAD serves as cofactor.

It is found in the cytoplasm. NAD-binding protein involved in the addition of a carboxymethylaminomethyl (cmnm) group at the wobble position (U34) of certain tRNAs, forming tRNA-cmnm(5)s(2)U34. The chain is tRNA uridine 5-carboxymethylaminomethyl modification enzyme MnmG from Polynucleobacter asymbioticus (strain DSM 18221 / CIP 109841 / QLW-P1DMWA-1) (Polynucleobacter necessarius subsp. asymbioticus).